Consider the following 157-residue polypeptide: SsrA-binding protein (157 aa).

It belongs to the SmpB family.

The protein localises to the cytoplasm. In terms of biological role, required for rescue of stalled ribosomes mediated by trans-translation. Binds to transfer-messenger RNA (tmRNA), required for stable association of tmRNA with ribosomes. tmRNA and SmpB together mimic tRNA shape, replacing the anticodon stem-loop with SmpB. tmRNA is encoded by the ssrA gene; the 2 termini fold to resemble tRNA(Ala) and it encodes a 'tag peptide', a short internal open reading frame. During trans-translation Ala-aminoacylated tmRNA acts like a tRNA, entering the A-site of stalled ribosomes, displacing the stalled mRNA. The ribosome then switches to translate the ORF on the tmRNA; the nascent peptide is terminated with the 'tag peptide' encoded by the tmRNA and targeted for degradation. The ribosome is freed to recommence translation, which seems to be the essential function of trans-translation. This is SsrA-binding protein from Aquifex aeolicus (strain VF5).